Here is a 141-residue protein sequence, read N- to C-terminus: Large ribosomal subunit protein bL17 (141 aa).

It belongs to the bacterial ribosomal protein bL17 family. In terms of assembly, part of the 50S ribosomal subunit. Contacts protein L32.

The chain is Large ribosomal subunit protein bL17 from Rhizobium meliloti (strain 1021) (Ensifer meliloti).